The chain runs to 259 residues: Protein odd-skipped-related 1 (259 aa).

C2H2-type zinc fingers lie at residues 168–190, 196–218, and 224–246; these read FVCKFCGRHFTKSYNLLIHERTH, YTCDICHKAFRRQDHLRDHRYIH, and FKCQECGKGFCQSRTLAVHKTLH.

The protein belongs to the Odd C2H2-type zinc-finger protein family. As to expression, at early gastrula stage, expressed in the involuting mesoderm and endoderm. During neurulation, expressed in the pronephric primordium, following expression of osr2. During tailbud (stage 35), expressed in the rectal diverticulum and in the kidney ducts.

Its subcellular location is the nucleus. Functionally, transcriptional repressor. Required for pronephric kidney development. The chain is Protein odd-skipped-related 1 from Xenopus laevis (African clawed frog).